Consider the following 294-residue polypeptide: 4-hydroxy-tetrahydrodipicolinate synthase (294 aa).

Pyruvate is bound at residue Thr-47. Catalysis depends on Tyr-135, which acts as the Proton donor/acceptor. The active-site Schiff-base intermediate with substrate is the Lys-163. Ile-206 provides a ligand contact to pyruvate.

This sequence belongs to the DapA family. In terms of assembly, homodimer.

The protein resides in the cytoplasm. It catalyses the reaction L-aspartate 4-semialdehyde + pyruvate = (2S,4S)-4-hydroxy-2,3,4,5-tetrahydrodipicolinate + H2O + H(+). It participates in amino-acid biosynthesis; L-lysine biosynthesis via DAP pathway; (S)-tetrahydrodipicolinate from L-aspartate: step 3/4. In terms of biological role, catalyzes the condensation of (S)-aspartate-beta-semialdehyde [(S)-ASA] and pyruvate to 4-hydroxy-tetrahydrodipicolinate (HTPA). The sequence is that of 4-hydroxy-tetrahydrodipicolinate synthase from Staphylococcus epidermidis (strain ATCC 35984 / DSM 28319 / BCRC 17069 / CCUG 31568 / BM 3577 / RP62A).